The sequence spans 312 residues: Tyrosine recombinase XerC (312 aa).

Residues 1–103 (MIASIYSFLD…SIKSFAHYCV (103 aa)) form the Core-binding (CB) domain. In terms of domain architecture, Tyr recombinase spans 124 to 306 (ELPSPMTYAQ…SVKLKKQTHQ (183 aa)). Residues R164, K188, H258, R261, and H284 contribute to the active site. Y293 (O-(3'-phospho-DNA)-tyrosine intermediate) is an active-site residue.

Belongs to the 'phage' integrase family. XerC subfamily. In terms of assembly, forms a cyclic heterotetrameric complex composed of two molecules of XerC and two molecules of XerD.

Its subcellular location is the cytoplasm. Functionally, site-specific tyrosine recombinase, which acts by catalyzing the cutting and rejoining of the recombining DNA molecules. The XerC-XerD complex is essential to convert dimers of the bacterial chromosome into monomers to permit their segregation at cell division. It also contributes to the segregational stability of plasmids. In Chlamydia pneumoniae (Chlamydophila pneumoniae), this protein is Tyrosine recombinase XerC.